The sequence spans 282 residues: Nucleotide-binding protein Shew_3314 (282 aa).

Position 8–15 (8–15 (GRSGSGKS)) interacts with ATP. 56–59 (DVRN) contributes to the GTP binding site.

This sequence belongs to the RapZ-like family.

Functionally, displays ATPase and GTPase activities. The sequence is that of Nucleotide-binding protein Shew_3314 from Shewanella loihica (strain ATCC BAA-1088 / PV-4).